Consider the following 449-residue polypeptide: Heterogeneous nuclear ribonucleoprotein H2 (449 aa).

M1 carries the post-translational modification N-acetylmethionine. An N-acetylmethionine; in Heterogeneous nuclear ribonucleoprotein H2, N-terminally processed modification is found at M2. One can recognise an RRM 1 domain in the interval 11–90 (FVVKVRGLPW…RYVEVFKSNS (80 aa)). A Phosphoserine modification is found at S23. Residue K35 forms a Glycyl lysine isopeptide (Lys-Gly) (interchain with G-Cter in SUMO2) linkage. Phosphoserine is present on residues S54 and S63. A Glycyl lysine isopeptide (Lys-Gly) (interchain with G-Cter in SUMO2) cross-link involves residue K87. Position 90 is a phosphoserine (S90). Residue K98 forms a Glycyl lysine isopeptide (Lys-Gly) (interchain with G-Cter in SUMO2) linkage. One can recognise an RRM 2 domain in the interval 111 to 188 (GFVRLRGLPF…RYIEIFKSSR (78 aa)). The residue at position 233 (R233) is a Dimethylated arginine; alternate. Residue R233 is modified to Omega-N-methylarginine; alternate. The 1-1 repeat unit spans residues 234 to 249 (GAYGGGYGGYDDYGGY). The segment at 234–433 (GAYGGGYGGY…YGGQSSMSGY (200 aa)) is 2 X 16 AA Gly-rich approximate repeats. Y246 is modified (phosphotyrosine). An RRM 3 domain is found at 289–364 (HCVHMRGLPY…RYVELFLNST (76 aa)). A Phosphoserine modification is found at S310. 3 repeat units span residues 354 to 372 (HRYVELFLNSTAGTSGGAY), 374 to 392 (HSYVELFLNSTAGASGGAY), and 418 to 433 (GGYGGGYGGQSSMSGY). Residues 354 to 392 (HRYVELFLNSTAGTSGGAYDHSYVELFLNSTAGASGGAY) form a 2 X 19 AA perfect repeats region.

Component of a ribonucleoprotein complex containing mRNAs and RNA-binding proteins including DDX5, HNRNPH2 and SRSF1 as well as splicing regulator ARVCF. Interacts with TXNL4/DIM1.

The protein localises to the nucleus. The protein resides in the nucleoplasm. This protein is a component of the heterogeneous nuclear ribonucleoprotein (hnRNP) complexes which provide the substrate for the processing events that pre-mRNAs undergo before becoming functional, translatable mRNAs in the cytoplasm. Binds poly(RG). The protein is Heterogeneous nuclear ribonucleoprotein H2 (HNRNPH2) of Bos taurus (Bovine).